Reading from the N-terminus, the 517-residue chain is Alpha-amylase (517 aa).

Residues 1–21 form the signal peptide; sequence MAHLLLAVVAITLALSQSVFG. Cysteines 52 and 108 form a disulfide. Residues Asn-122, Arg-178, and Asp-187 each contribute to the Ca(2+) site. Arg-215 lines the chloride pocket. Asp-217 serves as the catalytic Nucleophile. Ca(2+) is bound at residue His-221. Glu-253 acts as the Proton donor in catalysis. Position 355 (Arg-355) interacts with chloride. 2 disulfides stabilise this stretch: Cys-397/Cys-403 and Cys-470/Cys-482.

This sequence belongs to the glycosyl hydrolase 13 family. Monomer. It depends on Ca(2+) as a cofactor. The cofactor is chloride.

The protein localises to the secreted. The enzyme catalyses Endohydrolysis of (1-&gt;4)-alpha-D-glucosidic linkages in polysaccharides containing three or more (1-&gt;4)-alpha-linked D-glucose units.. Activated by chloride ions. Inhibited by acarbose. Not inhibited by wheat alpha-amylase inhibitors 1 (WI-1, the tetrameric form) or 3 (WI-3, the monomeric form) and bean alpha-amylase inhibitor 1 (alphaAI-1). The protein is Alpha-amylase of Acarus siro (Flour mite).